Reading from the N-terminus, the 287-residue chain is MSAIDGLPPLRDVIKRHDLAARKSLGQNFLLDLNLTARIARAAGPLDDVTVVEIGPGPGGLTRALLATGARRVIAIERDERALGALEEIAAHYPGRLEIVCADAMEFDPRPLLGGARARIVANLPYNIATPLLIGWLCAEPWPPWYDMMVLMFQREVAQRIVACEDDDAYGRLAVLSNWRCDTGMLFDIAPSAFVPQPKVTSSVVRLVPRSAPEPCNRAALEQVAAAAFGQRRKMLRQSLKALGVDPARLAAAAGIDPTRRAETVPVSGFVAMANELIDIRDTKNTP.

Residues asparagine 28, leucine 30, glycine 55, glutamate 77, aspartate 103, and asparagine 123 each coordinate S-adenosyl-L-methionine.

Belongs to the class I-like SAM-binding methyltransferase superfamily. rRNA adenine N(6)-methyltransferase family. RsmA subfamily.

It is found in the cytoplasm. The catalysed reaction is adenosine(1518)/adenosine(1519) in 16S rRNA + 4 S-adenosyl-L-methionine = N(6)-dimethyladenosine(1518)/N(6)-dimethyladenosine(1519) in 16S rRNA + 4 S-adenosyl-L-homocysteine + 4 H(+). In terms of biological role, specifically dimethylates two adjacent adenosines (A1518 and A1519) in the loop of a conserved hairpin near the 3'-end of 16S rRNA in the 30S particle. May play a critical role in biogenesis of 30S subunits. The chain is Ribosomal RNA small subunit methyltransferase A from Rhodopseudomonas palustris (strain HaA2).